The following is a 301-amino-acid chain: uncharacterized protein (301 aa).

Disordered stretches follow at residues 167–186 and 225–244; these read DVHL…PKER and ASES…EGAS. The span at 170–181 shows a compositional bias: polar residues; sequence LNSTTPPHTAQV. A compositionally biased stretch (low complexity) spans 226-237; sequence SESSLETSSVSS.

This is an uncharacterized protein from Mus musculus (Mouse).